Reading from the N-terminus, the 453-residue chain is Cysteine desulfurase, mitochondrial (453 aa).

Residues 1–34 (MASKVISATIRRTLTKPHGTFSRCRYLSTAAAAT) constitute a mitochondrion transit peptide. Pyridoxal 5'-phosphate is bound by residues 123–124 (AT), asparagine 203, glutamine 231, and 251–253 (SAH). Residue lysine 254 is modified to N6-(pyridoxal phosphate)lysine. Position 291 (threonine 291) interacts with pyridoxal 5'-phosphate. The active-site Cysteine persulfide intermediate is cysteine 377. Residue cysteine 377 coordinates [2Fe-2S] cluster.

It belongs to the class-V pyridoxal-phosphate-dependent aminotransferase family. NifS/IscS subfamily. Interacts with FH. Interacts with SUFE1. The cofactor is pyridoxal 5'-phosphate.

The protein localises to the mitochondrion. The enzyme catalyses (sulfur carrier)-H + L-cysteine = (sulfur carrier)-SH + L-alanine. Threefold increase in the catalytic activity in the presence of FH (frataxin). 30-fold increase in the catalytic activity in the presence of SUFE1. In terms of biological role, catalyzes the removal of elemental sulfur from cysteine to produce alanine. Supplies the inorganic sulfur for iron-sulfur (Fe-S) clusters. The polypeptide is Cysteine desulfurase, mitochondrial (Arabidopsis thaliana (Mouse-ear cress)).